The sequence spans 314 residues: Acetaldehyde dehydrogenase 1/2 (314 aa).

Residue 12–15 (SGNI) participates in NAD(+) binding. The Acyl-thioester intermediate role is filled by Cys130. Residues 161–169 (SAGPGTRAN) and Asn288 contribute to the NAD(+) site.

Belongs to the acetaldehyde dehydrogenase family.

The catalysed reaction is acetaldehyde + NAD(+) + CoA = acetyl-CoA + NADH + H(+). In Rhizorhabdus wittichii (strain DSM 6014 / CCUG 31198 / JCM 15750 / NBRC 105917 / EY 4224 / RW1) (Sphingomonas wittichii), this protein is Acetaldehyde dehydrogenase 1/2.